A 357-amino-acid chain; its full sequence is Protein-glutamate methylesterase/protein-glutamine glutaminase (357 aa).

The Response regulatory domain occupies 3 to 120 (RVLVVDDSAF…SLDLYKIKEQ (118 aa)). The residue at position 54 (Asp-54) is a 4-aspartylphosphate. The CheB-type methylesterase domain occupies 161 to 355 (PGTGRQIVCI…ASITSCVKKE (195 aa)). Residues Ser-173, His-200, and Asp-296 contribute to the active site.

This sequence belongs to the CheB family. Post-translationally, phosphorylated by CheA. Phosphorylation of the N-terminal regulatory domain activates the methylesterase activity.

It localises to the cytoplasm. It catalyses the reaction [protein]-L-glutamate 5-O-methyl ester + H2O = L-glutamyl-[protein] + methanol + H(+). The enzyme catalyses L-glutaminyl-[protein] + H2O = L-glutamyl-[protein] + NH4(+). Functionally, involved in the modulation of the chemotaxis system; catalyzes the demethylation of specific methylglutamate residues introduced into the chemoreceptors (methyl-accepting chemotaxis proteins) by CheR. B.subtilis has an effective methylation-independent adaptation system but must utilize the methylation system for adaptation to high concentrations of attractant. The chain is Protein-glutamate methylesterase/protein-glutamine glutaminase from Bacillus subtilis (strain 168).